Here is a 143-residue protein sequence, read N- to C-terminus: Nucleoside diphosphate kinase (143 aa).

ATP-binding residues include K11, F59, R87, T93, R104, and N114. The Pros-phosphohistidine intermediate role is filled by H117.

Belongs to the NDK family. Homotetramer. Mg(2+) serves as cofactor.

The protein localises to the cytoplasm. The enzyme catalyses a 2'-deoxyribonucleoside 5'-diphosphate + ATP = a 2'-deoxyribonucleoside 5'-triphosphate + ADP. It carries out the reaction a ribonucleoside 5'-diphosphate + ATP = a ribonucleoside 5'-triphosphate + ADP. Major role in the synthesis of nucleoside triphosphates other than ATP. The ATP gamma phosphate is transferred to the NDP beta phosphate via a ping-pong mechanism, using a phosphorylated active-site intermediate. The polypeptide is Nucleoside diphosphate kinase (Clostridium perfringens (strain ATCC 13124 / DSM 756 / JCM 1290 / NCIMB 6125 / NCTC 8237 / Type A)).